Here is a 185-residue protein sequence, read N- to C-terminus: Alkyl hydroperoxide reductase AhpD (185 aa).

Cys131 functions as the Proton donor in the catalytic mechanism. A disulfide bridge links Cys131 with Cys134. The Cysteine sulfenic acid (-SOH) intermediate role is filled by Cys134.

Belongs to the AhpD family. As to quaternary structure, homotrimer.

It catalyses the reaction N(6)-[(R)-dihydrolipoyl]-L-lysyl-[lipoyl-carrier protein] + a hydroperoxide = N(6)-[(R)-lipoyl]-L-lysyl-[lipoyl-carrier protein] + an alcohol + H2O. Antioxidant protein with alkyl hydroperoxidase activity. Required for the reduction of the AhpC active site cysteine residues and for the regeneration of the AhpC enzyme activity. The polypeptide is Alkyl hydroperoxide reductase AhpD (Frankia alni (strain DSM 45986 / CECT 9034 / ACN14a)).